Consider the following 297-residue polypeptide: Virulence genes transcriptional activator SpvR (297 aa).

The HTH lysR-type domain maps to 1–61; sequence MDFLINKKLK…IRKNGTLIPT (61 aa). A DNA-binding region (H-T-H motif) is located at residues 21 to 40; the sequence is FSIATSVLYITRTPLSRVIS.

The protein belongs to the LysR transcriptional regulatory family.

The protein localises to the cytoplasm. In terms of biological role, positive regulator for the plasmid-encoded virulence factors SpvA, SpvB, and SpvC. The polypeptide is Virulence genes transcriptional activator SpvR (spvR) (Salmonella dublin).